We begin with the raw amino-acid sequence, 404 residues long: O-methyltransferase GME11366 (404 aa).

Residues 237–238, D262, R301, and R302 contribute to the S-adenosyl-L-methionine site; that span reads GG. The Proton acceptor role is filled by H305.

Belongs to the class I-like SAM-binding methyltransferase superfamily. Cation-independent O-methyltransferase family.

It participates in secondary metabolite biosynthesis. O-methyltransferase; part of the gene cluster that mediates the biosynthesis of dibenzodioxocinones such as pestalotiollide B, a novel class of inhibitors against cholesterol ester transfer protein (CEPT). The biosynthesis initiates from condensation of acetate and malonate units catalyzed by the non-reducing PKS pks8/GME11356. Pks8/GME11356 lacks a thioesterase (TE) domain, which is important to the cyclizing of the third ring of atrochrysone carboxylic acid, and the esterase GME11355 might play the role of TE and catalyzes the cyclization reaction of the C ring. The lactamase-like protein GME11357 (or other beta-lactamases in Pestalotiopsis microspora) probably hydrolyzes the thioester bond between the ACP of pks8/GME11356 and the intermediate to release atrochrysone carboxylic acid, which is spontaneously dehydrates to form endocrocin anthrone. Endocrocin anthrone is further converted to emodin via the endocrocin intermediate. Emodin is then oxidized by several enzymes such as the Baeyer-Villiger oxidase GME11358, the oxidoreductase GME11367, the short chain dehydrogenase/reductase GME11373, as well as by other oxidoreductases from the cluster, to modify the A and C rings and open the B ring, and finally yield monodictyphenone. The prenyltransferase GME11375 may catalyze the addition reaction between the C5 side chains and the carbon bone of dibenzodioxocinones. The remaining biochemical reactions to the final product dibenzodioxocinones should be methylation catalyzed by methyltransferase GME11366 and reduction and lactonization reaction catalyzed by a series of oxidordeuctases. In Pestalotiopsis microspora, this protein is O-methyltransferase GME11366.